The following is a 200-amino-acid chain: Elongation factor Ts (200 aa).

Residues 82–85 form an involved in Mg(2+) ion dislocation from EF-Tu region; that stretch reads TDFV.

This sequence belongs to the EF-Ts family.

The protein resides in the cytoplasm. Associates with the EF-Tu.GDP complex and induces the exchange of GDP to GTP. It remains bound to the aminoacyl-tRNA.EF-Tu.GTP complex up to the GTP hydrolysis stage on the ribosome. The chain is Elongation factor Ts from Solidesulfovibrio magneticus (strain ATCC 700980 / DSM 13731 / RS-1) (Desulfovibrio magneticus).